The chain runs to 218 residues: Ropporin-1-like protein (218 aa).

Positions 17–46 constitute an RIIa domain; it reads PELTDILKQFTKAAIRTQPADVLQWSAGYF.

Belongs to the ropporin family. As to quaternary structure, component of the axonemal radial spoke complex 1 (RS1), at least composed of spoke head proteins RSPH1, RSPH3, RSPH9 and the cilia-specific component RSPH4A or sperm-specific component RSPH6A, spoke stalk proteins RSPH14, DNAJB13, DYDC1, ROPN1L and NME5, and the anchor protein IQUB. May interact with AKAP3. Interacts with FSCB; the interaction increases upon spermatozoa capacitation conditions. Interacts with CFAP61. In terms of processing, sumoylated, sumoylation decreases upon spermatozoa capacitation conditions.

The protein localises to the cell projection. Its subcellular location is the cilium. It is found in the flagellum. Its function is as follows. Functions as part of axonemal radial spoke complexes that play an important part in the motility of sperm and cilia. Important for male fertility. With ROPN1, involved in fibrous sheath integrity and sperm motility, plays a role in PKA-dependent signaling processes required for spermatozoa capacitation. The polypeptide is Ropporin-1-like protein (ROPN1L) (Bos taurus (Bovine)).